The sequence spans 154 residues: MVLSDAEWQLVLNIWAKVEADVAGHGQDILIRLFKGHPETLEKFDKFKHLKTEAEMKASEDLKKHGNTVLTALGGILKKKGHHEAELKPLAQSHATKHKIPIKYLEFISDAIIHVLHSRHPADFGADAQAAMNKALELFRKDIAAKYKELGFQG.

The region spanning 2–148 is the Globin domain; sequence VLSDAEWQLV…FRKDIAAKYK (147 aa). Serine 4 carries the post-translational modification Phosphoserine. Histidine 65 lines the nitrite pocket. Histidine 65 serves as a coordination point for O2. Threonine 68 carries the post-translational modification Phosphothreonine. Histidine 94 is a binding site for heme b.

The protein belongs to the globin family. In terms of assembly, monomeric.

Its subcellular location is the cytoplasm. It localises to the sarcoplasm. The catalysed reaction is Fe(III)-heme b-[protein] + nitric oxide + H2O = Fe(II)-heme b-[protein] + nitrite + 2 H(+). It carries out the reaction H2O2 + AH2 = A + 2 H2O. In terms of biological role, monomeric heme protein which primary function is to store oxygen and facilitate its diffusion within muscle tissues. Reversibly binds oxygen through a pentacoordinated heme iron and enables its timely and efficient release as needed during periods of heightened demand. Depending on the oxidative conditions of tissues and cells, and in addition to its ability to bind oxygen, it also has a nitrite reductase activity whereby it regulates the production of bioactive nitric oxide. Under stress conditions, like hypoxia and anoxia, it also protects cells against reactive oxygen species thanks to its pseudoperoxidase activity. The polypeptide is Myoglobin (MB) (Megaptera novaeangliae (Humpback whale)).